Reading from the N-terminus, the 225-residue chain is Phosphoglycolate phosphatase (225 aa).

Residue D11 is the Nucleophile of the active site. Residues D11 and D13 each contribute to the Mg(2+) site. K153 serves as a coordination point for substrate. Mg(2+)-binding residues include D176 and D180.

It belongs to the archaeal SPP-like hydrolase family. The cofactor is Mg(2+).

It catalyses the reaction 2-phosphoglycolate + H2O = glycolate + phosphate. In terms of biological role, catalyzes the dephosphorylation of 2-phosphoglycolate. The polypeptide is Phosphoglycolate phosphatase (Halobacterium salinarum (strain ATCC 29341 / DSM 671 / R1)).